Consider the following 859-residue polypeptide: Replication origin-binding protein (859 aa).

A Helicase ATP-binding domain is found at 70-235 (PLAADARRVT…AALRGAGSVH (166 aa)). Position 83-90 (83-90 (APMGSGKT)) interacts with ATP.

Belongs to the herpesviridae OriBP family. In terms of assembly, homodimer. Interacts with the major DNA-binding protein. Interacts with the helicase/primase component UL8 and the polymerase accessory protein.

It localises to the host nucleus. Functionally, functions as a docking protein to recruit essential components of the viral replication machinery to viral DNA origins. In the presence of the major DNA-binding protein, opens dsDNA leading to a conformational change in the origin that facilitates DNA unwinding and subsequent replication. This chain is Replication origin-binding protein (UL9), found in Bovine herpesvirus 1.1 (strain Cooper) (BoHV-1).